We begin with the raw amino-acid sequence, 147 residues long: Acireductone dioxygenase (147 aa).

4 residues coordinate Fe(2+): His-74, His-76, Glu-80, and His-119. Ni(2+) is bound by residues His-74, His-76, Glu-80, and His-119.

Belongs to the acireductone dioxygenase (ARD) family. It depends on Fe(2+) as a cofactor. The cofactor is Ni(2+).

It is found in the cytoplasm. The protein localises to the nucleus. It carries out the reaction 1,2-dihydroxy-5-(methylsulfanyl)pent-1-en-3-one + O2 = 4-methylsulfanyl-2-oxobutanoate + formate + 2 H(+). The catalysed reaction is 1,2-dihydroxy-5-(methylsulfanyl)pent-1-en-3-one + O2 = 3-(methylsulfanyl)propanoate + CO + formate + 2 H(+). The protein operates within amino-acid biosynthesis; L-methionine biosynthesis via salvage pathway; L-methionine from S-methyl-5-thio-alpha-D-ribose 1-phosphate: step 5/6. Its function is as follows. Catalyzes 2 different reactions between oxygen and the acireductone 1,2-dihydroxy-3-keto-5-methylthiopentene (DHK-MTPene) depending upon the metal bound in the active site. Fe-containing acireductone dioxygenase (Fe-ARD) produces formate and 2-keto-4-methylthiobutyrate (KMTB), the alpha-ketoacid precursor of methionine in the methionine recycle pathway. Ni-containing acireductone dioxygenase (Ni-ARD) produces methylthiopropionate, carbon monoxide and formate, and does not lie on the methionine recycle pathway. The sequence is that of Acireductone dioxygenase (adi1) from Dictyostelium discoideum (Social amoeba).